The chain runs to 426 residues: ORC1-type DNA replication protein 1 (426 aa).

ATP contacts are provided by residues 62-66 (VGKTL), tyrosine 211, and arginine 223.

Belongs to the CDC6/cdc18 family.

In terms of biological role, involved in regulation of DNA replication. The polypeptide is ORC1-type DNA replication protein 1 (cdc6a) (Haloarcula marismortui (strain ATCC 43049 / DSM 3752 / JCM 8966 / VKM B-1809) (Halobacterium marismortui)).